A 230-amino-acid polypeptide reads, in one-letter code: Ubiquitin carboxyl-terminal hydrolase isozyme L3 (230 aa).

One can recognise a UCH catalytic domain in the interval 5–229 (RWLPLEANPE…LRFNAIALSA (225 aa)). The tract at residues 8-13 (PLEANP) is interaction with ubiquitin. Catalysis depends on Cys-95, which acts as the Nucleophile. Ser-130 bears the Phosphoserine mark. The interval 152-159 (AHEGQTEA) is interaction with ubiquitin. Crossover loop which restricts access of large ubiquitin adducts to the active site. Residue His-169 is the Proton donor of the active site. The interaction with ubiquitin stretch occupies residues 219 to 224 (ELRFNA).

This sequence belongs to the peptidase C12 family. Preferentially binds diubiquitin; the interaction does not hydrolyze diubiquitin but, in vitro, inhibits the hydrolyzing activity on other substrates. In terms of tissue distribution, highly expressed in heart, skeletal muscle, and testis.

It localises to the cytoplasm. The enzyme catalyses Thiol-dependent hydrolysis of ester, thioester, amide, peptide and isopeptide bonds formed by the C-terminal Gly of ubiquitin (a 76-residue protein attached to proteins as an intracellular targeting signal).. Its activity is regulated as follows. Inhibited by monoubiquitin and diubiquitin. In terms of biological role, deubiquitinating enzyme (DUB) that controls levels of cellular ubiquitin through processing of ubiquitin precursors and ubiquitinated proteins. Thiol protease that recognizes and hydrolyzes a peptide bond at the C-terminal glycine of either ubiquitin or NEDD8. Has a 10-fold preference for Arg and Lys at position P3'', and exhibits a preference towards 'Lys-48'-linked ubiquitin chains. Deubiquitinates ENAC in apical compartments, thereby regulating apical membrane recycling. Indirectly increases the phosphorylation of IGFIR, AKT and FOXO1 and promotes insulin-signaling and insulin-induced adipogenesis. Required for stress-response retinal, skeletal muscle and germ cell maintenance. May be involved in working memory. Can hydrolyze UBB(+1), a mutated form of ubiquitin which is not effectively degraded by the proteasome and is associated with neurogenerative disorders. The polypeptide is Ubiquitin carboxyl-terminal hydrolase isozyme L3 (UCHL3) (Homo sapiens (Human)).